A 116-amino-acid polypeptide reads, in one-letter code: Large ribosomal subunit protein bL20 (116 aa).

It belongs to the bacterial ribosomal protein bL20 family.

In terms of biological role, binds directly to 23S ribosomal RNA and is necessary for the in vitro assembly process of the 50S ribosomal subunit. It is not involved in the protein synthesizing functions of that subunit. In Fusobacterium nucleatum subsp. nucleatum (strain ATCC 25586 / DSM 15643 / BCRC 10681 / CIP 101130 / JCM 8532 / KCTC 2640 / LMG 13131 / VPI 4355), this protein is Large ribosomal subunit protein bL20.